The chain runs to 354 residues: Eukaryotic translation initiation factor 3 subunit H (354 aa).

The disordered stretch occupies residues 1 to 28 (MATRQPYQKKFQSRDQREQTSSQQAPNS). Residues 19–28 (QTSSQQAPNS) show a composition bias toward polar residues. An MPN domain is found at 33 to 174 (VTVDALVVMK…LSAFRLSNKA (142 aa)).

The protein belongs to the eIF-3 subunit H family. In terms of assembly, component of the eukaryotic translation initiation factor 3 (eIF-3) complex.

The protein resides in the cytoplasm. Functionally, component of the eukaryotic translation initiation factor 3 (eIF-3) complex, which is involved in protein synthesis of a specialized repertoire of mRNAs and, together with other initiation factors, stimulates binding of mRNA and methionyl-tRNAi to the 40S ribosome. The eIF-3 complex specifically targets and initiates translation of a subset of mRNAs involved in cell proliferation. The polypeptide is Eukaryotic translation initiation factor 3 subunit H (Monosiga brevicollis (Choanoflagellate)).